Reading from the N-terminus, the 114-residue chain is Large ribosomal subunit protein uL18 (114 aa).

Belongs to the universal ribosomal protein uL18 family. In terms of assembly, part of the 50S ribosomal subunit; part of the 5S rRNA/L5/L18/L25 subcomplex. Contacts the 5S and 23S rRNAs.

In terms of biological role, this is one of the proteins that bind and probably mediate the attachment of the 5S RNA into the large ribosomal subunit, where it forms part of the central protuberance. The chain is Large ribosomal subunit protein uL18 from Bacteroides thetaiotaomicron (strain ATCC 29148 / DSM 2079 / JCM 5827 / CCUG 10774 / NCTC 10582 / VPI-5482 / E50).